Reading from the N-terminus, the 409-residue chain is Carbamoyl phosphate synthase arginine-specific small chain (409 aa).

A Glutamine amidotransferase type-1 domain is found at 197–389 (NVALIDCGVK…FDNMSQYRAL (193 aa)). Catalysis depends on C277, which acts as the Nucleophile. Residues H362 and E364 contribute to the active site.

It belongs to the CarA family. In terms of assembly, heterodimer composed of 2 chains; the small (or glutamine) chain promotes the hydrolysis of glutamine to ammonia, which is used by the large (or ammonia) chain to synthesize carbamoyl phosphate.

It localises to the cytoplasm. It catalyses the reaction hydrogencarbonate + L-glutamine + 2 ATP + H2O = carbamoyl phosphate + L-glutamate + 2 ADP + phosphate + 2 H(+). The catalysed reaction is L-glutamine + H2O = L-glutamate + NH4(+). It participates in amino-acid biosynthesis; L-arginine biosynthesis; carbamoyl phosphate from bicarbonate: step 1/1. Its function is as follows. Small subunit of the arginine-specific carbamoyl phosphate synthase (CPSase). CPSase catalyzes the formation of carbamoyl phosphate from the ammonia moiety of glutamine, carbonate, and phosphate donated by ATP, constituting the first step of 2 biosynthetic pathways, one leading to arginine and/or urea and the other to pyrimidine nucleotides. The small subunit (glutamine amidotransferase) binds and cleaves glutamine to supply the large subunit with the substrate ammonia. This Kluyveromyces lactis (strain ATCC 8585 / CBS 2359 / DSM 70799 / NBRC 1267 / NRRL Y-1140 / WM37) (Yeast) protein is Carbamoyl phosphate synthase arginine-specific small chain (CPA1).